Reading from the N-terminus, the 695-residue chain is Threonine--tRNA ligase (695 aa).

A TGS domain is found at 1-76; it reads MPRIPSPPQA…TTTDVVEPVT (76 aa). Residues 279–585 are catalytic; sequence DHRKLGVELD…LLEHHAGAFP (307 aa). Positions 384, 435, and 562 each coordinate Zn(2+).

Belongs to the class-II aminoacyl-tRNA synthetase family. As to quaternary structure, homodimer. The cofactor is Zn(2+).

It localises to the cytoplasm. The catalysed reaction is tRNA(Thr) + L-threonine + ATP = L-threonyl-tRNA(Thr) + AMP + diphosphate + H(+). In terms of biological role, catalyzes the attachment of threonine to tRNA(Thr) in a two-step reaction: L-threonine is first activated by ATP to form Thr-AMP and then transferred to the acceptor end of tRNA(Thr). Also edits incorrectly charged L-seryl-tRNA(Thr). The chain is Threonine--tRNA ligase from Leifsonia xyli subsp. xyli (strain CTCB07).